Here is a 1359-residue protein sequence, read N- to C-terminus: NPC1-like intracellular cholesterol transporter 1 (1359 aa).

An N-terminal signal peptide occupies residues 1 to 21 (MAEAGLRGWLLWALLLRLAQS). Over 22 to 284 (EPYTTIHQPG…TFYLGQMPGS (263 aa)) the chain is Extracellular. 9 disulfide bridges follow: cysteine 33/cysteine 90, cysteine 39/cysteine 57, cysteine 78/cysteine 125, cysteine 91/cysteine 129, cysteine 113/cysteine 254, cysteine 116/cysteine 172, cysteine 189/cysteine 197, cysteine 243/cysteine 259, and cysteine 256/cysteine 263. Asparagine 54 carries N-linked (GlcNAc...) asparagine glycosylation. Residues asparagine 132 and asparagine 138 are each glycosylated (N-linked (GlcNAc...) asparagine). Asparagine 244 carries an N-linked (GlcNAc...) asparagine glycan. Residues 285 to 305 (LVLIIILCSVFAVVTILLVGF) traverse the membrane as a helical segment. Residues 306-351 (RVAPARDKSKMVDPKKGTSLSDKLSFSTHTLLGQFFQGWGTWVASW) are Cytoplasmic-facing. Residues 352–372 (PLTILVLSVIPVVALAAGLVF) form a helical membrane-spanning segment. Over 373–632 (TELTTDPVEL…DEINRTTAED (260 aa)) the chain is Extracellular. N-linked (GlcNAc...) asparagine glycans are attached at residues asparagine 416, asparagine 431, asparagine 464, asparagine 479, asparagine 497, and asparagine 506. Cysteine 471 and cysteine 485 are oxidised to a cystine. Cysteine 525 and cysteine 542 are disulfide-bonded. The N-linked (GlcNAc...) asparagine glycan is linked to asparagine 626. In terms of domain architecture, SSD spans 632 to 797 (DLPIFATSYI…MSAFVALLSL (166 aa)). The helical transmembrane segment at 633 to 653 (LPIFATSYIVIFLYISLALGS) threads the bilayer. Topologically, residues 654-666 (YSSWSRVMVDSKA) are cytoplasmic. Residues 667 to 687 (TLGLGGVAVVLGAVMAAMGFF) form a helical membrane-spanning segment. The Extracellular portion of the chain corresponds to 688–696 (SYLGIRSSL). A helical membrane pass occupies residues 697-717 (VILQVVPFLVLSVGADNIFIF). The Cytoplasmic segment spans residues 718-742 (VLEYQRLPRRPGEPREVHIGRALGR). The helical transmembrane segment at 743–763 (VAPSMLLCSLSEAICFFLGAL) threads the bilayer. Over 764–776 (TPMPAVRTFALTS) the chain is Extracellular. A helical transmembrane segment spans residues 777 to 797 (GLAVILDFLLQMSAFVALLSL). At 798–846 (DSKRQEASRLDVCCCVKPQELPPPGQGEGLLLGFFQKAYAPFLLHWITR) the chain is on the cytoplasmic side. Residues 847 to 867 (GVVLLLFLALFGVSLYSMCHI) traverse the membrane as a helical segment. At 868 to 1139 (SVGLDQELAL…EQYLTILPEG (272 aa)) the chain is on the extracellular side. Cystine bridges form between cysteine 920–cysteine 925, cysteine 966–cysteine 1024, and cysteine 980–cysteine 989. The chain crosses the membrane as a helical span at residues 1140–1160 (LFMLSLCLVPTFAVSCLLLGL). Residues 1161–1168 (DLRSGLLN) lie on the Cytoplasmic side of the membrane. The chain crosses the membrane as a helical span at residues 1169-1189 (LLSIVMILVDTVGFMALWGIS). At 1190-1191 (YN) the chain is on the extracellular side. The helical transmembrane segment at 1192 to 1212 (AVSLINLVSAVGMSVEFVSHI) threads the bilayer. The Cytoplasmic segment spans residues 1213 to 1236 (TRSFAISTKPTWLERAKEATISMG). A helical membrane pass occupies residues 1237-1257 (SAVFAGVAMTNLPGILVLGLA). Residues 1258-1268 (KAQLIQIFFFR) lie on the Extracellular side of the membrane. A helical membrane pass occupies residues 1269–1289 (LNLLITLLGLLHGLVFLPVIL). The Cytoplasmic portion of the chain corresponds to 1290–1359 (SYVGPDVNPA…NFLPNNGRQF (70 aa)).

The protein belongs to the patched family. As to quaternary structure, interacts with RAB11A, MYO5B and RAB11FIP2. Interaction with RAB11A, MYO5B and RAB11FIP2 is required for proper transport to the plasma membrane upon cholesterol depletion. Interacts with NPC2. Interacts with LIMA1. Highly glycosylated. In terms of tissue distribution, widely expressed. Expressed in liver. Also expressed in small intestine, pancreas, kidney, lung, pancreas, spleen, heart, gall bladder, brain, testis, stomach and muscle.

It localises to the apical cell membrane. It is found in the cell membrane. The protein resides in the cytoplasmic vesicle membrane. It carries out the reaction cholesterol(in) = cholesterol(out). The catalysed reaction is sitosterol(out) = sitosterol(in). Plays a major role in cholesterol homeostasis. Critical for the uptake of cholesterol across the plasma membrane of the intestinal enterocyte. Involved in plant sterol absorption, it transports sitosterol, although at lower rates than cholesterol. Is the direct molecular target of ezetimibe, a drug that inhibits cholesterol absorption and is approved for the treatment of hypercholesterolemia. May have a function in the transport of multiple lipids and their homeostasis, thereby influencing lipid metabolism regulation. May be involved in caveolin trafficking from the plasma membrane. In addition, acts as a negative regulator of NPC2 and down-regulates its expression and secretion by inhibiting its maturation and accelerating its degradation. This chain is NPC1-like intracellular cholesterol transporter 1, found in Homo sapiens (Human).